The chain runs to 386 residues: V-type proton ATPase subunit B 2 (386 aa).

It belongs to the ATPase alpha/beta chains family. In terms of assembly, V-ATPase is a heteromultimeric enzyme composed of a peripheral catalytic V1 complex (main components: subunits A, B, C, D, E, and F) attached to an integral membrane V0 proton pore complex (main component: the proteolipid protein).

In terms of biological role, non-catalytic subunit of the peripheral V1 complex of vacuolar ATPase. V-ATPase is responsible for acidifying a variety of intracellular compartments in eukaryotic cells. This Gossypium hirsutum (Upland cotton) protein is V-type proton ATPase subunit B 2.